The chain runs to 219 residues: Lipoprotein-releasing system ATP-binding protein LolD (219 aa).

One can recognise an ABC transporter domain in the interval 3 to 219 (IEARNIRKSF…HMRDGLLFSE (217 aa)). Residue 35 to 42 (GTSGAGKT) coordinates ATP.

This sequence belongs to the ABC transporter superfamily. Lipoprotein translocase (TC 3.A.1.125) family. In terms of assembly, the complex is composed of two ATP-binding proteins (LolD) and two transmembrane proteins (LolC and LolE).

It is found in the cell inner membrane. Functionally, part of the ABC transporter complex LolCDE involved in the translocation of mature outer membrane-directed lipoproteins, from the inner membrane to the periplasmic chaperone, LolA. Responsible for the formation of the LolA-lipoprotein complex in an ATP-dependent manner. The protein is Lipoprotein-releasing system ATP-binding protein LolD of Porphyromonas gingivalis (strain ATCC BAA-308 / W83).